A 168-amino-acid chain; its full sequence is Endoribonuclease YbeY (168 aa).

Residues His125, His129, and His135 each contribute to the Zn(2+) site.

Belongs to the endoribonuclease YbeY family. Zn(2+) is required as a cofactor.

The protein resides in the cytoplasm. In terms of biological role, single strand-specific metallo-endoribonuclease involved in late-stage 70S ribosome quality control and in maturation of the 3' terminus of the 16S rRNA. This Rhodopseudomonas palustris (strain BisB18) protein is Endoribonuclease YbeY.